Consider the following 397-residue polypeptide: S-adenosylmethionine synthase (397 aa).

His17 is an ATP binding site. Asp19 provides a ligand contact to Mg(2+). A K(+)-binding site is contributed by Glu45. Residues Glu58 and Gln101 each coordinate L-methionine. The tract at residues 101–111 (QSPDIAQGVDK) is flexible loop. ATP contacts are provided by residues 176 to 178 (DGK), 243 to 244 (RF), Asp252, 258 to 259 (RK), and Lys279. Residue Asp252 coordinates L-methionine. Lys283 lines the L-methionine pocket.

This sequence belongs to the AdoMet synthase family. Homotetramer; dimer of dimers. It depends on Mg(2+) as a cofactor. The cofactor is K(+).

It localises to the cytoplasm. The enzyme catalyses L-methionine + ATP + H2O = S-adenosyl-L-methionine + phosphate + diphosphate. It participates in amino-acid biosynthesis; S-adenosyl-L-methionine biosynthesis; S-adenosyl-L-methionine from L-methionine: step 1/1. In terms of biological role, catalyzes the formation of S-adenosylmethionine (AdoMet) from methionine and ATP. The overall synthetic reaction is composed of two sequential steps, AdoMet formation and the subsequent tripolyphosphate hydrolysis which occurs prior to release of AdoMet from the enzyme. This chain is S-adenosylmethionine synthase, found in Staphylococcus aureus.